The sequence spans 750 residues: Photosystem I P700 chlorophyll a apoprotein A1 (750 aa).

Helical transmembrane passes span 70-93 (VFSAHFGQLSIIFLWLSGMYFHGA), 156-179 (LYCTAIGALIFASLMLFAGWFHYH), 195-219 (LNHHLAGLLGLGSLSWAGHQIHVSL), 291-309 (IAHHHLAIAILFLIAGHMY), 346-369 (WHAQLSLNLAMLGSTTIVVAHHMY), 385-411 (LSLFTHHMWIGGFLIVGAAAHAAIFMV), 433-455 (AIISHLNWVCIFLGFHSFGLYIH), and 531-549 (FLVHHIHAFTIHVTVLILL). Residues C573 and C582 each contribute to the [4Fe-4S] cluster site. 2 helical membrane passes run 589 to 610 (HVFLGLFWMYNSISVVIFHFSW) and 664 to 686 (LSAYGLFFLGAHFVWAFSLMFLF). H675 provides a ligand contact to chlorophyll a'. Residues M683 and Y691 each coordinate chlorophyll a. Residue W692 participates in phylloquinone binding. The helical transmembrane segment at 724–744 (AVGVTHYLLGGIATTWAFFLA) threads the bilayer.

This sequence belongs to the PsaA/PsaB family. The PsaA/B heterodimer binds the P700 chlorophyll special pair and subsequent electron acceptors. PSI consists of a core antenna complex that captures photons, and an electron transfer chain that converts photonic excitation into a charge separation. The eukaryotic PSI reaction center is composed of at least 11 subunits. The cofactor is P700 is a chlorophyll a/chlorophyll a' dimer, A0 is one or more chlorophyll a, A1 is one or both phylloquinones and FX is a shared 4Fe-4S iron-sulfur center..

It localises to the plastid. The protein resides in the chloroplast thylakoid membrane. It carries out the reaction reduced [plastocyanin] + hnu + oxidized [2Fe-2S]-[ferredoxin] = oxidized [plastocyanin] + reduced [2Fe-2S]-[ferredoxin]. Its function is as follows. PsaA and PsaB bind P700, the primary electron donor of photosystem I (PSI), as well as the electron acceptors A0, A1 and FX. PSI is a plastocyanin-ferredoxin oxidoreductase, converting photonic excitation into a charge separation, which transfers an electron from the donor P700 chlorophyll pair to the spectroscopically characterized acceptors A0, A1, FX, FA and FB in turn. Oxidized P700 is reduced on the lumenal side of the thylakoid membrane by plastocyanin. The protein is Photosystem I P700 chlorophyll a apoprotein A1 of Saccharum hybrid (Sugarcane).